A 271-amino-acid polypeptide reads, in one-letter code: Phosphatidylinositol transfer protein alpha isoform (271 aa).

Residues Thr-59, Lys-61, Glu-86, Asn-90, Thr-97, and Lys-195 each coordinate a 1,2-diacyl-sn-glycero-3-phospho-(1D-myo-inositol). Lys-216 carries the post-translational modification N6-acetyllysine. The segment covering 251–264 (TKRQLDEMRQKDPV) has biased composition (basic and acidic residues). Positions 251 to 271 (TKRQLDEMRQKDPVKGMTADD) are disordered.

This sequence belongs to the PtdIns transfer protein family. PI transfer class I subfamily. Post-translationally, phosphorylated by PKC in a calcium and phosphatidylserine-dependent manner. In terms of tissue distribution, expressed in a wide range of tissues.

The protein resides in the cytoplasm. The protein localises to the nucleus. The enzyme catalyses a 1,2-diacyl-sn-glycero-3-phosphocholine(in) = a 1,2-diacyl-sn-glycero-3-phosphocholine(out). The catalysed reaction is a 1,2-diacyl-sn-glycero-3-phospho-(1D-myo-inositol)(in) = a 1,2-diacyl-sn-glycero-3-phospho-(1D-myo-inositol)(out). Its activity is regulated as follows. Phosphatidylinositol transfer activity is inhibited by N-ethylmaleimide. Functionally, catalyzes the transfer of phosphatidylinositol (PI) and phosphatidylcholine (PC) between membranes. Shows a preference for PI and PC containing shorter saturated or monosaturated acyl chains at the sn-1 and sn-2 positions. Preference order for PC is C16:1 &gt; C16:0 &gt; C18:1 &gt; C18:0 &gt; C20:4 and for PI is C16:1 &gt; C16:0 &gt; C18:1 &gt; C18:0 &gt; C20:4 &gt; C20:3. The polypeptide is Phosphatidylinositol transfer protein alpha isoform (Pitpna) (Rattus norvegicus (Rat)).